The sequence spans 372 residues: Aminomethyltransferase (372 aa).

Belongs to the GcvT family. As to quaternary structure, the glycine cleavage system is composed of four proteins: P, T, L and H.

It catalyses the reaction N(6)-[(R)-S(8)-aminomethyldihydrolipoyl]-L-lysyl-[protein] + (6S)-5,6,7,8-tetrahydrofolate = N(6)-[(R)-dihydrolipoyl]-L-lysyl-[protein] + (6R)-5,10-methylene-5,6,7,8-tetrahydrofolate + NH4(+). The glycine cleavage system catalyzes the degradation of glycine. The polypeptide is Aminomethyltransferase (Prochlorococcus marinus (strain NATL2A)).